The chain runs to 519 residues: Minor capsid protein L2 (519 aa).

The Nuclear localization signal motif lies at 1 to 10; that stretch reads MVRAQRTKRA. Cysteine 19 and cysteine 25 are joined by a disulfide. The Nuclear localization signal motif lies at 511–518; that stretch reads KKRRKRKY.

It belongs to the papillomaviridae L2 protein family. As to quaternary structure, interacts with major capsid protein L1. Interacts with E2; this interaction inhibits E2 transcriptional activity but not the DNA replication function E2. Interacts with host GADD45GIP1. Interacts with host HSPA8; this interaction is required for L2 nuclear translocation. Interacts with host importins KPNB2 and KPNB3. Forms a complex with importin alpha2-beta1 heterodimers via interaction with the importin alpha2 adapter. Interacts with host DYNLT1; this interaction is essential for virus intracellular transport during entry. Interacts (via C-terminus) with host retromer subunits VPS35 and VPS29. Post-translationally, highly phosphorylated.

It is found in the virion. The protein localises to the host nucleus. It localises to the host early endosome. Its subcellular location is the host Golgi apparatus. Functionally, minor protein of the capsid that localizes along the inner surface of the virion, within the central cavities beneath the L1 pentamers. Plays a role in capsid stabilization through interaction with the major capsid protein L1. Once the virion enters the host cell, L2 escorts the genomic DNA into the nucleus by promoting escape from the endosomal compartments and traffic through the host Golgi network. Mechanistically, the C-terminus of L2 possesses a cell-penetrating peptide that protudes from the host endosome, interacts with host cytoplasmic retromer cargo and thereby mediates the capsid delivery to the host trans-Golgi network. Plays a role through its interaction with host dynein in the intracellular microtubule-dependent transport of viral capsid toward the nucleus. Mediates the viral genome import into the nucleus through binding to host importins. Once within the nucleus, L2 localizes viral genomes to host PML bodies in order to activate early gene expression for establishment of infection. Later on, promotes late gene expression by interacting with the viral E2 protein and by inhibiting its transcriptional activation functions. During virion assembly, encapsidates the genome by direct interaction with the viral DNA. The protein is Minor capsid protein L2 of Homo sapiens (Human).